A 244-amino-acid polypeptide reads, in one-letter code: NAD-dependent protein deacylase SIR2rp3 (244 aa).

A Deacetylase sirtuin-type domain is found at Met1–Gly239. Gly13–Trp32 serves as a coordination point for NAD(+). 2 residues coordinate substrate: Tyr57 and Arg60. Gln95–Asp98 contributes to the NAD(+) binding site. His113 functions as the Proton acceptor in the catalytic mechanism. Residues Cys121 and Cys141 each coordinate Zn(2+). NAD(+) contacts are provided by residues Gly181–Ser183 and Ala225.

The protein belongs to the sirtuin family. Class III subfamily. It depends on Zn(2+) as a cofactor.

The protein localises to the mitochondrion. The catalysed reaction is N(6)-malonyl-L-lysyl-[protein] + NAD(+) + H2O = 2''-O-malonyl-ADP-D-ribose + nicotinamide + L-lysyl-[protein]. It catalyses the reaction N(6)-succinyl-L-lysyl-[protein] + NAD(+) + H2O = 2''-O-succinyl-ADP-D-ribose + nicotinamide + L-lysyl-[protein]. The enzyme catalyses N(6)-glutaryl-L-lysyl-[protein] + NAD(+) + H2O = 2''-O-glutaryl-ADP-D-ribose + nicotinamide + L-lysyl-[protein]. Its function is as follows. NAD-dependent lysine demalonylase, desuccinylase and deglutarylase that specifically removes malonyl, succinyl and glutaryl groups on target proteins. Has weak NAD-dependent protein deacetylase activity; however this activity may not be physiologically relevant in vivo. The protein is NAD-dependent protein deacylase SIR2rp3 (SIR2rp3) of Trypanosoma brucei brucei (strain 927/4 GUTat10.1).